We begin with the raw amino-acid sequence, 235 residues long: Myelin protein zero-like protein 3 (235 aa).

An N-terminal signal peptide occupies residues 1–31 (MQQRGAAGSRGCALFPLLGVLFFQGVYIVFS). Residues 32–148 (LEIRADAHVR…NIPMTELTVT (117 aa)) form the Ig-like V-type domain. At 32–158 (LEIRADAHVR…ERGFGTMLSS (127 aa)) the chain is on the extracellular side. An intrachain disulfide couples C52 to C128. N-linked (GlcNAc...) asparagine glycosylation is present at N123. A helical membrane pass occupies residues 159-179 (VALLSILVFVPSAVVVALLLV). The Cytoplasmic segment spans residues 180–235 (RMGRKAAGLKKRSRSGYKKSSIEVSDDTDQEEEEACMARLCVRCAECLDSDYEETY).

It belongs to the myelin P0 protein family.

The protein localises to the membrane. Its function is as follows. Mediates homophilic cell-cell adhesion. The chain is Myelin protein zero-like protein 3 (MPZL3) from Homo sapiens (Human).